The chain runs to 774 residues: Lon protease 1 (774 aa).

Residues 9 to 202 (IPLLPLRGLL…KVIDFINNEK (194 aa)) form the Lon N-terminal domain. Residue 354 to 361 (GPPGVGKT) coordinates ATP. Residues 590 to 771 (EDQVGVVTGL…DEVLEHALVG (182 aa)) enclose the Lon proteolytic domain. Catalysis depends on residues serine 677 and lysine 720.

It belongs to the peptidase S16 family. In terms of assembly, homohexamer. Organized in a ring with a central cavity. Exists as a mixture of small oligomeric species in solution.

The protein resides in the cytoplasm. It catalyses the reaction Hydrolysis of proteins in presence of ATP.. Functionally, ATP-dependent serine protease that mediates the selective degradation of mutant and abnormal proteins as well as certain short-lived regulatory proteins. Required for cellular homeostasis and for survival from DNA damage and developmental changes induced by stress. Degrades polypeptides processively to yield small peptide fragments that are 5 to 10 amino acids long. Binds to DNA in a double-stranded, site-specific manner. Has been implicated in preventing sigma(G) activity under non-sporulation conditions. The polypeptide is Lon protease 1 (Bacillus subtilis (strain 168)).